A 103-amino-acid chain; its full sequence is Stefin-3 (103 aa).

The short motif at 52 to 56 (QVVAG) is the Secondary area of contact element.

It belongs to the cystatin family.

It is found in the cytoplasm. Functionally, this is an intracellular thiol proteinase inhibitor. This is Stefin-3 (Stfa3) from Mus musculus (Mouse).